A 722-amino-acid polypeptide reads, in one-letter code: Endoglucanase F (722 aa).

A signal peptide spans 1 to 29 (MSKNFKRVGAVAVAAAMSLSIMATTSINA). Residues 142–165 (PEFQDPSKYPSPLDTSQPVGRDPI) form a disordered region. The segment covering 154 to 165 (LDTSQPVGRDPI) has biased composition (polar residues). In terms of domain architecture, Dockerin spans 661-722 (PEKLLGDVNG…LLKKALLSIQ (62 aa)).

It belongs to the glycosyl hydrolase 48 (cellulase L) family.

It catalyses the reaction Endohydrolysis of (1-&gt;4)-beta-D-glucosidic linkages in cellulose, lichenin and cereal beta-D-glucans.. Its function is as follows. Probable endoglucanase involved in the degradation of cellulose or related beta-glucans. The polypeptide is Endoglucanase F (celCCF) (Ruminiclostridium cellulolyticum (strain ATCC 35319 / DSM 5812 / JCM 6584 / H10) (Clostridium cellulolyticum)).